The primary structure comprises 430 residues: Tyrosine--tRNA ligase (430 aa).

Tyrosine 32 is an L-tyrosine binding site. A 'HIGH' region motif is present at residues 37–46 (PTADSLHIGH). Residues tyrosine 172 and glutamine 176 each contribute to the L-tyrosine site. Positions 232 to 236 (KFGKT) match the 'KMSKS' region motif. Lysine 235 provides a ligand contact to ATP. The region spanning 362–429 (VKAVDLFVDN…GKKNYFLLIA (68 aa)) is the S4 RNA-binding domain.

This sequence belongs to the class-I aminoacyl-tRNA synthetase family. TyrS type 1 subfamily. In terms of assembly, homodimer.

The protein localises to the cytoplasm. The catalysed reaction is tRNA(Tyr) + L-tyrosine + ATP = L-tyrosyl-tRNA(Tyr) + AMP + diphosphate + H(+). Its function is as follows. Catalyzes the attachment of tyrosine to tRNA(Tyr) in a two-step reaction: tyrosine is first activated by ATP to form Tyr-AMP and then transferred to the acceptor end of tRNA(Tyr). The protein is Tyrosine--tRNA ligase of Bacteroides thetaiotaomicron (strain ATCC 29148 / DSM 2079 / JCM 5827 / CCUG 10774 / NCTC 10582 / VPI-5482 / E50).